A 445-amino-acid polypeptide reads, in one-letter code: Branched-chain amino acid permease BraB (445 aa).

Helical transmembrane passes span I11–P31, I45–L65, P79–I99, L122–P142, F158–A178, F192–V212, A233–A253, Y275–T295, L311–I331, I339–V359, I375–F395, and I415–I435.

The protein belongs to the branched chain amino acid transporter family.

The protein resides in the cell membrane. Functionally, branched-chain amino acid transport system which is involved in the uptake of isoleucine, valine and probably leucine. Together with BcaP and BrnQ, plays an important role in the activation of CodY, a branched-chain amino acid-responsive transcriptional regulator that controls the expression of several dozen transcription units in B.subtilis. The protein is Branched-chain amino acid permease BraB of Bacillus subtilis (strain 168).